The sequence spans 248 residues: 3-deoxy-manno-octulosonate cytidylyltransferase (248 aa).

This sequence belongs to the KdsB family.

Its subcellular location is the cytoplasm. The catalysed reaction is 3-deoxy-alpha-D-manno-oct-2-ulosonate + CTP = CMP-3-deoxy-beta-D-manno-octulosonate + diphosphate. It participates in nucleotide-sugar biosynthesis; CMP-3-deoxy-D-manno-octulosonate biosynthesis; CMP-3-deoxy-D-manno-octulosonate from 3-deoxy-D-manno-octulosonate and CTP: step 1/1. The protein operates within bacterial outer membrane biogenesis; lipopolysaccharide biosynthesis. Its function is as follows. Activates KDO (a required 8-carbon sugar) for incorporation into bacterial lipopolysaccharide in Gram-negative bacteria. The sequence is that of 3-deoxy-manno-octulosonate cytidylyltransferase from Salmonella enteritidis PT4 (strain P125109).